The following is a 160-amino-acid chain: MAESIQSLDQLSQLKGAVTAPDAPKYEKKVDKFGRAYATGKRKDAVARVWIKPGSGKVTVNTRDIEVYFARPVLRMMIEQPMVVAARKGQYDVICTVAGGGLSGQAGAVRHGLSKALTNFEPELRSVLKKGGFLTRDSRVVERKKYGKAKARRSFQFSKR.

Belongs to the universal ribosomal protein uS9 family.

This chain is Small ribosomal subunit protein uS9, found in Bradyrhizobium sp. (strain ORS 278).